A 431-amino-acid polypeptide reads, in one-letter code: Histidinol dehydrogenase (431 aa).

Residues Tyr130, Gln191, and Asn214 each coordinate NAD(+). Substrate contacts are provided by Ser237, Gln261, and His264. Residues Gln261 and His264 each coordinate Zn(2+). Active-site proton acceptor residues include Glu329 and His330. Positions 330, 363, 417, and 422 each coordinate substrate. Asp363 is a Zn(2+) binding site. His422 serves as a coordination point for Zn(2+).

The protein belongs to the histidinol dehydrogenase family. Requires Zn(2+) as cofactor.

It catalyses the reaction L-histidinol + 2 NAD(+) + H2O = L-histidine + 2 NADH + 3 H(+). It functions in the pathway amino-acid biosynthesis; L-histidine biosynthesis; L-histidine from 5-phospho-alpha-D-ribose 1-diphosphate: step 9/9. Functionally, catalyzes the sequential NAD-dependent oxidations of L-histidinol to L-histidinaldehyde and then to L-histidine. The sequence is that of Histidinol dehydrogenase from Psychrobacter arcticus (strain DSM 17307 / VKM B-2377 / 273-4).